A 42-amino-acid polypeptide reads, in one-letter code: Photosystem I reaction center subunit IX (42 aa).

The chain crosses the membrane as a helical span at residues 7-27 (YLSVAPVLSTLWFVSLAGLLI).

The protein belongs to the PsaJ family.

The protein localises to the plastid. It localises to the chloroplast thylakoid membrane. May help in the organization of the PsaE and PsaF subunits. In Capsella bursa-pastoris (Shepherd's purse), this protein is Photosystem I reaction center subunit IX.